The chain runs to 82 residues: Small ribosomal subunit protein uS17 (82 aa).

Belongs to the universal ribosomal protein uS17 family. Part of the 30S ribosomal subunit.

In terms of biological role, one of the primary rRNA binding proteins, it binds specifically to the 5'-end of 16S ribosomal RNA. The chain is Small ribosomal subunit protein uS17 from Phenylobacterium zucineum (strain HLK1).